We begin with the raw amino-acid sequence, 420 residues long: ATP phosphoribosyltransferase regulatory subunit (420 aa).

Belongs to the class-II aminoacyl-tRNA synthetase family. HisZ subfamily. Heteromultimer composed of HisG and HisZ subunits.

The protein localises to the cytoplasm. The protein operates within amino-acid biosynthesis; L-histidine biosynthesis; L-histidine from 5-phospho-alpha-D-ribose 1-diphosphate: step 1/9. Functionally, required for the first step of histidine biosynthesis. May allow the feedback regulation of ATP phosphoribosyltransferase activity by histidine. The polypeptide is ATP phosphoribosyltransferase regulatory subunit (Synechococcus sp. (strain ATCC 27144 / PCC 6301 / SAUG 1402/1) (Anacystis nidulans)).